The following is a 29-amino-acid chain: Trypsin inhibitor 5 (29 aa).

Intrachain disulfides connect cysteine 3–cysteine 20, cysteine 10–cysteine 22, and cysteine 16–cysteine 28.

The protein belongs to the protease inhibitor I7 (squash-type serine protease inhibitor) family.

It localises to the secreted. Functionally, strongly inhibits trypsin, weakly inhibits chymotrypsin. The protein is Trypsin inhibitor 5 of Cyclanthera pedata (Achocha).